A 700-amino-acid chain; its full sequence is MGSLSPLSFLWGLLLLQGVLRPLRGDPVFIPPFIRMSSPEVRASLVGGSEDVTVSLTPLQIKEGVLPVPTCGGLRNETGDWNLTVSPQANMLEVTVRWKRGLDWCSPDETASFSEAPCIVQTLLVSASHNASCLAHLLIQVEIYPNTSVTHNASENMTVIPNQVYQPLGPCPCDLTAKACDIRCCCDQDCQPELRELFERFCFSGVFGGYVSPPSHHRCAARTTHQTPDWFPFLCVQSPPSTSPFLGHFYHGAISPRHSPGFETHSHLDLRDFFADASYKQGDPIMTTNGYFTIPQASLAGQCLQDAPVAFLRNFHSVCTTDLEVQERDRLIPEDMRIRTTGGLVTPTVTYEEATDLDKLITSPDTILSAGSAPRNVTVEEHYVFRWQNNSISSLDITIIRAEINAHQRGTMTQRFTVKFLSPNSGGEKEFSGNPGYQLGKPVRALHTDGMNVTTLHLWQPAGRGLCTSAALRPVLFGEDASSGCLLEVGIKENCTQLRENVLQRLDLLIQATHVARRGNSDYGDLSDGWLEVIRVDAPDAGADLPLSSANGMCPEVPTHVTIRILTAEAGAVEGEAQREILAVETRFSTVTWQYQCGLTCEEDKADLLPLSASVKFINIPAQMPRPTRFQINFTEYDCTRNELCWPQLLYPLTQYYQGEPRPQCVAKGLMLLSLLMLAILLRHPWVGMCKAWSSASIQH.

The N-terminal stretch at 1 to 25 (MGSLSPLSFLWGLLLLQGVLRPLRG) is a signal peptide. The Extracellular segment spans residues 26 to 665 (DPVFIPPFIR…YYQGEPRPQC (640 aa)). Asn76, Asn82, Asn146, Asn156, and Asn389 each carry an N-linked (GlcNAc...) asparagine glycan. Residues 666–682 (VAKGLMLLSLLMLAILL) form a helical membrane-spanning segment. The Cytoplasmic segment spans residues 683–700 (RHPWVGMCKAWSSASIQH).

It belongs to the tectonic family. As to quaternary structure, part of the tectonic-like complex (also named B9 complex).

Its subcellular location is the membrane. The protein localises to the cytoplasm. It localises to the cytoskeleton. The protein resides in the cilium basal body. Functionally, component of the tectonic-like complex, a complex localized at the transition zone of primary cilia and acting as a barrier that prevents diffusion of transmembrane proteins between the cilia and plasma membranes. Required for hedgehog signaling transduction. This is Tectonic-2 (Tctn2) from Rattus norvegicus (Rat).